The following is a 389-amino-acid chain: Chitin-binding protein CbpD (389 aa).

Positions 1-25 (MKHYSATLALLPLTLALFLPQAAHA) are cleaved as a signal peptide. One can recognise a Chitin-binding type-4 domain in the interval 26–208 (HGSMETPPSR…EAFYACIDVS (183 aa)). At Y37 the chain carries Phosphotyrosine. A Phosphoserine modification is found at S210.

The protein resides in the secreted. Its function is as follows. Binds but does not hydrolyze chitin. The chain is Chitin-binding protein CbpD (cpbD) from Pseudomonas aeruginosa (strain UCBPP-PA14).